A 501-amino-acid chain; its full sequence is Phosphatidylinositol 4-kinase type 2-beta (501 aa).

2 disordered regions span residues 1–30 (MMAECDPTDGEPGNGSGDSTPETNFLSSEV) and 65–122 (TELE…NHFP). Over residues 17–27 (GDSTPETNFLS) the composition is skewed to polar residues. Residues 76–88 (ALLLPGPAGSLSP) show a composition bias toward low complexity. A compositionally biased stretch (polar residues) spans 99–117 (NMLSSSSDNLASPGNSSGE). Residues 141-471 (GVFPERISQG…VQMPRVVVER (331 aa)) form the PI3K/PI4K catalytic domain. The G-loop stretch occupies residues 147–153 (ISQGSSG). 2 residues coordinate ATP: S154 and K169. The interval 174 to 176 (EPY) is important for substrate binding. The tract at residues 182-195 (KWTKYFHKVCCPCC) is important for interaction with membranes. ATP-binding positions include 278 to 281 (QLFV) and 292 to 293 (RK). Positions 285-293 (HEADFWLRK) are important for interaction with membranes. A catalytic loop region spans residues 322 to 330 (RNTDRGNDN). An activation loop region spans residues 362 to 382 (AIDNGLAFPFKHPDEWRAYPF). ATP is bound at residue D364. The interval 377 to 386 (WRAYPFHWAW) is important for interaction with membranes.

This sequence belongs to the PI3/PI4-kinase family. Type II PI4K subfamily.

The protein localises to the cytoplasm. It is found in the cytosol. Its subcellular location is the golgi apparatus membrane. It localises to the endoplasmic reticulum membrane. The protein resides in the cell membrane. The protein localises to the early endosome membrane. The enzyme catalyses a 1,2-diacyl-sn-glycero-3-phospho-(1D-myo-inositol) + ATP = a 1,2-diacyl-sn-glycero-3-phospho-(1D-myo-inositol 4-phosphate) + ADP + H(+). Functionally, contributes to the overall PI4-kinase activity of the cell. This contribution may be especially significant in plasma membrane, endosomal and Golgi compartments. The phosphorylation of phosphatidylinositol (PI) to PI4P is the first committed step in the generation of phosphatidylinositol 4,5-bisphosphate (PIP2), a precursor of the second messenger inositol 1,4,5-trisphosphate (InsP3). The polypeptide is Phosphatidylinositol 4-kinase type 2-beta (pi4k2b) (Danio rerio (Zebrafish)).